The chain runs to 3032 residues: MHLHQVLTGAVNPGDNCYSVGSVGDVPFTAYGSGCDIVILASDFECVQIIPGAKHGNIQVSCVECSNQHGRVAASYGNAVCIFEPLGVNSHKRNSQLKCQWLKTGQFFLSSVTYNLAWDPQDNRLLTATDSIQLWAPPGGDILEEEEDVDNRAPPVLNDWKCIWQCKTSVSVHLMEWSPDGEYFATAGKDDCLLKVWYPMTGWKSSIIPQDPHEVKRRRASTQFSFVYLAHPRAVTGFSWRKTSKYMPRGSVCNVLLTSCHDGVCRLWAETLLPEDCLLGEQICETTTSSVASNLSSAGKHKDRIQHALETIHHLKNLRKGQRRSSVLVTHAELMPDKTATHEVHRHISHHANALCHFHIAASINPTTDIPNVLVGTAFNIDDINGGFVVHWLNNKEFHFTSSTEIFMHQLRKLSEKQLDHESDDADREDEERSQDERERGLRMKLDHELSLDRESEAGTGSSEHEDGEREGSPRTHPRPSISMPLPTVLLDRKIETLLTEWNKNPDMLFTIHPVDGTFLVWHVKYLDEYNPGIFRQVQVSFSSRIPVAFPSGDANSLSKNIMMYACVNATKDSYNPSQQEMMSVDSPHGSQLHSPSHSTDMNILAPTVMMVSKHIDGSLNQWAVTFADKSAFTTVLTVSHKFRYCGHRFHLNDLACHSVLPLLLTSSHHNALLTPESDCQWDSDSKVNRLIDPVKHTKASSKQPLRNAATRTFHDPNAIYSELILWRVDPIGPLSYTGGVSELARINSLHTSAFSNVAWLPTLIPSYCLGTYCNSASACFVASDGKNLRLYQAVVDARKLLDELSDPEASKLIGEVFNIVSQQSTARPGCIIELDAITDQCGSNTQLLHVFQEDFIIGYKPHKEDMEKKEKESEIFFQPSQGYRPPPFSEKFFLVVIEKDGNNNSILHMWHLHLKSVQACLAKAAEGISSDSLLSVPGQKNLDSSPETSSSMSSVPHSSSIANLQTASKLILSSRLVYSQPLDLPEAVEVIRATPSAGHLSSSSIYPVCLAPYLVVTTCSDNKVRFWKCCMETNSLGNTSDESETYHWRRWPLMNDEGEDNSSTVSIVGRPVAVSCSYTGRLAVAYKQPIHHNGFISKEFSMHVCIFECESTGGSEWVLEQTIHLDDLVKVGSVLDSRVSVDSNLFVYSKSDAFLSKDRYLIPNIKHLVHLDWVSKEDGSHILTVGVGANIFMYGRLSGIVSDQTNSKDGVAVITLPLGGSIKQGVKSRWVLLRSIDLVSSVDGTPSLPVSLSWVRDGILVVGMDCEMHVYAQWKHSVKFGNVDADSPVEETIQDHSALKSSMLARKSIVEGAAIPDDVFCSPTVVQDGGLFEAAHALSPTLPQYHPTQLLELMDLGKVRRAKAILSHLVKCIAGEVAIVRDPDAGEGTKRHLSRTISVSGSTAKDTVTIGKDGTRDYTEIDSIPPLPLHALLAADQDTSYRISEDSTKKPQSYEDHIESQSEDQYSELFQVQEITTDDIDLEPEKRENKSKVINLSQYGPACFGQEHARVLSSHLMHSSLPGLTRLEQMFLVALADTVATTSTELDENRDKNYSGRDTLDECGLRYLLAMRLHTCLLTSLPPLYRVQLLHQGVSTCHFAWAFHSEAEEELINMIPAIQRGDPQWSELRAMGIGWWVRNVNTLRRCIEKVAKAAFQRNNEALDAALFYLSMKKKAVVWGLFRSQHDEKMTTFFSHNFNEDRWRKAALKNAFSLLGKQRFEQSAAFFLLAGSLKDAIEVCLEKMEDIQLAMVIARLFESEFETSSTYISILNQKILGCQKDGTGFDCKRLHPDPFLRSLAYWVVKDYTRALDTLLEQTPKEDDEQQVIIKSCNPVVFSFYNYLRTHPLLIRRNLASPEGTLATLGLKTEKNIADKINLIERKLFFTTANAHFKVGCPVLALEVLSKIPKVTKISSLTAKKDQLDSVSGRMENGPSESKPVSRSDGGSGADWSAVTSSQFDWSQPMVTVDEEPLRLDWGDDHDGALEEDDGGGLVMKTTDAKKAGQEQSASDPRALLTPQDEECADGDTEVDVIAEQLKFRACLKILMTELRTLATGYEVDGGKLRFQLYNWLEKEIAALHEICNHESVIKEYSSKAHSTVETERLDQEEMVDKPDIGSYERHQIERRRLQAKREHAERRKLWLQKNQDLLRVFLSYCSLHGAQGGGLASVRMELKFLLQESQQETTVKQLQSPLPLPTTLPLLSASIASTKTVIANPVLYLNNHIHDILYTIVQMKTPPHPSVEDVKVHTLHSLAASLSASIYQALCDSHSYSQSEGNQFTGMAYQGLLLSDRRRLRTESIEEHATPNSAPAQWPGVSSLINLLSSAQDEDQPKLNVLLCEAVVAVYLSLLIHALATNSSNELFRLAAHPLNNRMWAAVFGGGVKLVVKPRRQSESIAAPPVASEDMDKHRRRFNMRMLVPGRPVKDATPPPVPAERPSYKEKFIPPELSMWDYFVAKPFLPLSDSGVIYDSDESVHSDDEEDDAFFSDTQIQEHQDPNSYSWALLHLTMVKLALHNIKNFFPIAGLEFSELPVTSPLGIAVIKNLENWEQILQEKMDHFEGPPPNYVNTYPTDLSVGAGPAILRNKAMLEPENTPFKSRDSSALPVKRLWHFLVKQEVLQETFIRYIFTKKRKQSEVEADLGYPGGKAKVIHKESDMIMAFSINKANCNEIVLASTHDVQELDVTSLLACQSYIWIGEEYDRESKSSDDIDYRGSTTTLYQPGAASHSSSQPHPPPSLPWLGSGQTSTGATVLMKRNLHNVKRMTSHPVHQYYLTGAQDGSVRMFEWTRPQQLVCFRQAGNARVTRLYFNSQGNKCGVADGEGFLSIWQVNQTASNPKPYMSWQCHSKATSDFAFITSSSLVATSGHSNDNRNVCLWDTLISPGNSLIHGFTCHDHGATVLQYAPKQQLLISGGRKGYICIFDIRQRQLIHTFQAHDSAIKALALDSCEEYFTTGSAEGNIKVWRLTGHGLIHSFKSEHAKQSIFRNIGAGVMQIAISQDNRLFSCGADGTLKTRVLPSAFNIPNRILDIL.

3 WD repeats span residues 108–145 (FLSS…ILEE), 167–207 (KTSV…KSSI), and 230–278 (AHPR…EDCL). Ser-326 carries the post-translational modification Phosphoserine. The interval 418–486 (QLDHESDDAD…HPRPSISMPL (69 aa)) is disordered. The span at 422–434 (ESDDADREDEERS) shows a compositional bias: acidic residues. The segment covering 435–474 (QDERERGLRMKLDHELSLDRESEAGTGSSEHEDGEREGSP) has biased composition (basic and acidic residues). Ser-473 is subject to Phosphoserine. The stretch at 492-532 (DRKIETLLTEWNKNPDMLFTIHPVDGTFLVWHVKYLDEYNP) is one WD 4 repeat. Residues 577–598 (PSQQEMMSVDSPHGSQLHSPSH) are disordered. Residue Ser-587 is modified to Phosphoserine. The segment covering 589-598 (HGSQLHSPSH) has biased composition (polar residues). 3 WD repeats span residues 594–633 (HSPS…KSAF), 750–802 (LHTS…RKLL), and 879–921 (QPSQ…VQAC). Residues 937-958 (VPGQKNLDSSPETSSSMSSVPH) form a disordered region. Phosphoserine is present on residues Ser-945 and Ser-946. Residues 945-958 (SSPETSSSMSSVPH) are compositionally biased toward low complexity. The WD 8 repeat unit spans residues 1001–1038 (LSSSSIYPVCLAPYLVVTTCSDNKVRFWKCCMETNSLG). 3 positions are modified to phosphoserine: Ser-1141, Ser-1144, and Ser-1152. WD repeat units follow at residues 1164–1205 (PNIK…VSDQ) and 1245–1285 (GTPS…GNVD). A phosphoserine mark is found at Ser-1288 and Ser-1399. A Phosphothreonine modification is found at Thr-1416. The disordered stretch occupies residues 1443-1464 (RISEDSTKKPQSYEDHIESQSE). Residues 1444–1461 (ISEDSTKKPQSYEDHIES) are compositionally biased toward basic and acidic residues. Ser-1856 is subject to Phosphoserine. The tract at residues 1922 to 1953 (QLDSVSGRMENGPSESKPVSRSDGGSGADWSA) is disordered. At Thr-2017 the chain carries Phosphothreonine. A coiled-coil region spans residues 2117–2146 (GSYERHQIERRRLQAKREHAERRKLWLQKN). Residues Ser-2394 and Ser-2636 each carry the phosphoserine modification. Over residues 2722–2732 (QPGAASHSSSQ) the composition is skewed to low complexity. Positions 2722–2744 (QPGAASHSSSQPHPPPSLPWLGS) are disordered. WD repeat units follow at residues 2757 to 2796 (RNLH…QLVC), 2800 to 2839 (AGNA…SNPK), 2846 to 2888 (CHSK…GNSL), 2894 to 2933 (CHDH…LIHT), 2936 to 2975 (AHDS…LIHS), and 2988 to 3026 (NIGA…NIPN).

In terms of assembly, interacts with MADD and RAB3GAP. As to expression, expressed in the brain and pituitary gland. Detected in the hippocampus, dentate gyrus, hypothalamus, pyriform cortex and the granular and molecular layers of the cerebellum of adult animals. In the hypothalamus, expression is observed in the arcuate nucleus, the ME, the organum vasculosum of the lamina terminalis, and the subfornical organ, the subcommissural organ, and the suprachiasmatic nucleus. Both tanycytes and hypothalamic neurosecretory neurons express the protein. Expressed in the inner and outer hair cells as well as in the spiral ganglion neurons. Expressed in insulin-secreting cells of the islets of Langerhans in the pancreas.

It is found in the cytoplasmic vesicle. The protein localises to the secretory vesicle. The protein resides in the synaptic vesicle membrane. Its subcellular location is the neuronal dense core vesicle. Functionally, may serve as a scaffold protein for MADD and RAB3GA on synaptic vesicles of neuronal and endocrine homeostatic processes. Plays a role in the brain as a key controller of neuronal and endocrine homeostatic processes. This Mus musculus (Mouse) protein is DmX-like protein 2 (Dmxl2).